Here is a 340-residue protein sequence, read N- to C-terminus: Ketol-acid reductoisomerase (NADP(+)) (340 aa).

Residues 3 to 183 enclose the KARI N-terminal Rossmann domain; that stretch reads LPIYYDKDCD…GGGRTGIIHT (181 aa). Residues 26-29, serine 54, and 84-87 each bind NADP(+); these read FGSQ and DEIQ. The active site involves histidine 109. NADP(+) is bound at residue glycine 135. A KARI C-terminal knotted domain is found at 184 to 329; it reads TFKDETETDL…KRLRAMMPWI (146 aa). Mg(2+) contacts are provided by aspartate 192, glutamate 196, glutamate 228, and glutamate 232. Serine 253 serves as a coordination point for substrate.

Belongs to the ketol-acid reductoisomerase family. It depends on Mg(2+) as a cofactor.

It carries out the reaction (2R)-2,3-dihydroxy-3-methylbutanoate + NADP(+) = (2S)-2-acetolactate + NADPH + H(+). The catalysed reaction is (2R,3R)-2,3-dihydroxy-3-methylpentanoate + NADP(+) = (S)-2-ethyl-2-hydroxy-3-oxobutanoate + NADPH + H(+). The protein operates within amino-acid biosynthesis; L-isoleucine biosynthesis; L-isoleucine from 2-oxobutanoate: step 2/4. It functions in the pathway amino-acid biosynthesis; L-valine biosynthesis; L-valine from pyruvate: step 2/4. Involved in the biosynthesis of branched-chain amino acids (BCAA). Catalyzes an alkyl-migration followed by a ketol-acid reduction of (S)-2-acetolactate (S2AL) to yield (R)-2,3-dihydroxy-isovalerate. In the isomerase reaction, S2AL is rearranged via a Mg-dependent methyl migration to produce 3-hydroxy-3-methyl-2-ketobutyrate (HMKB). In the reductase reaction, this 2-ketoacid undergoes a metal-dependent reduction by NADPH to yield (R)-2,3-dihydroxy-isovalerate. The protein is Ketol-acid reductoisomerase (NADP(+)) of Nitratiruptor sp. (strain SB155-2).